We begin with the raw amino-acid sequence, 715 residues long: ATP-dependent zinc metalloprotease YME1L1 (715 aa).

The Mitochondrial matrix portion of the chain corresponds to 1-237; that stretch reads MFSLSSTVQP…TNDSLRRTRL (237 aa). Residues 34–54 are disordered; the sequence is NTPVSQKQHRDTVPEHEAPSS. Basic and acidic residues predominate over residues 41 to 52; sequence QHRDTVPEHEAP. Residues 238 to 258 traverse the membrane as a helical segment; it reads ILFVLLLFGIYGLLKNPFLSV. At 259-715 the chain is on the mitochondrial intermembrane side; the sequence is RFRTTTGLDS…VLEGKKLEVR (457 aa). ATP is bound by residues Val-283, Thr-325, Gly-326, Lys-327, Thr-328, and Leu-329. His-541 contacts Zn(2+). Glu-542 is a catalytic residue. Zn(2+) is bound by residues His-545 and Asp-619.

The protein in the N-terminal section; belongs to the AAA ATPase family. This sequence in the C-terminal section; belongs to the peptidase M41 family. In terms of assembly, homohexamer; may also form heterohexamers. Exists in several complexes of 600-1100 kDa. Interacts with AFG1L. It depends on Zn(2+) as a cofactor. In terms of processing, proteolytically processed by mitochondrial processing peptidase (MPP) to generate the mature form. Degraded in an OMA1-dependent manner in response to oxidative stress. In terms of tissue distribution, detected in heart and skeletal muscle (at protein level).

The protein localises to the mitochondrion inner membrane. The protein resides in the mitochondrion. It catalyses the reaction ATP + H2O = ADP + phosphate + H(+). In terms of biological role, ATP-dependent metalloprotease that catalyzes the degradation of folded and unfolded proteins with a suitable degron sequence in the mitochondrial intermembrane region. Plays an important role in regulating mitochondrial morphology and function by cleaving OPA1 at position S2, giving rise to a form of OPA1 that promotes maintenance of normal mitochondrial structure and mitochondrial protein metabolism. Ensures cell proliferation, maintains normal cristae morphology and complex I respiration activity, promotes antiapoptotic activity and protects mitochondria from the accumulation of oxidatively damaged membrane proteins. Required to control the accumulation of nonassembled respiratory chain subunits (NDUFB6, OX4 and ND1). Involved in the mitochondrial adaptation in response to various signals, such as stress or developmental cues, by mediating degradation of mitochondrial proteins to rewire the mitochondrial proteome. Catalyzes degradation of mitochondrial proteins, such as translocases, lipid transfer proteins and metabolic enzymes in response to nutrient starvation in order to limit mitochondrial biogenesis: mechanistically, YME1L is activated by decreased phosphatidylethanolamine levels caused by LPIN1 activity in response to mTORC1 inhibition. Acts as a regulator of adult neural stem cell self-renewal by promoting mitochondrial proteome rewiring, preserving neural stem and progenitor cells self-renewal. Required for normal, constitutive degradation of PRELID1. Catalyzes the degradation of OMA1 in response to membrane depolarization. Mediates degradation of TIMM17A downstream of the integrated stress response (ISR). Catalyzes degradation of MICU1 when MICU1 is not assembled via an interchain disulfide. This is ATP-dependent zinc metalloprotease YME1L1 (Yme1l1) from Mus musculus (Mouse).